A 119-amino-acid polypeptide reads, in one-letter code: Methylglyoxal synthase (119 aa).

The MGS-like domain occupies 1 to 119; sequence MRIALIAHDK…GTADLIIKQF (119 aa). Substrate is bound by residues His8, Lys12, 34–37, and 54–55; these read TGTT and SG. Asp60 functions as the Proton donor/acceptor in the catalytic mechanism. Position 87 (His87) interacts with substrate.

This sequence belongs to the methylglyoxal synthase family.

The enzyme catalyses dihydroxyacetone phosphate = methylglyoxal + phosphate. Functionally, catalyzes the formation of methylglyoxal from dihydroxyacetone phosphate. This Clostridium botulinum (strain Eklund 17B / Type B) protein is Methylglyoxal synthase.